The primary structure comprises 179 residues: M-zodatoxin-Lt4b (179 aa).

A signal peptide spans 1–22; it reads MKFSIIALALAVAFVCVAESRS. Residues 23–43 constitute a propeptide that is removed on maturation; that stretch reads EEEGYDVSEEIQAEELEEAAR. A Processing quadruplet motif 1 motif is present at residues 40–43; the sequence is EAAR. A Glutamine amide modification is found at Gln61. The short motif at 63-66 is the Inverted processing quadruplet motif 1 element; the sequence is REDS. Residues 63–71 constitute a propeptide that is removed on maturation; the sequence is REDSEDAGR. The Processing quadruplet motif 2 motif lies at 68–71; it reads DAGR. Gln89 is subject to Glutamine amide. Residues 91–94 carry the Inverted processing quadruplet motif 2 motif; that stretch reads REDT. Positions 91–99 are excised as a propeptide; that stretch reads REDTEEAGR. Residues 96–99 carry the Processing quadruplet motif 3 motif; the sequence is EAGR. Gln117 carries the glutamine amide modification. Residues 119–122 carry the Inverted processing quadruplet motif 3 motif; sequence REDS. A propeptide spanning residues 119–127 is cleaved from the precursor; that stretch reads REDSEEAGR. Residues 124 to 127 carry the Processing quadruplet motif 4 motif; the sequence is EAGR. At Gln145 the chain carries Glutamine amide. The Inverted processing quadruplet motif 4 motif lies at 147 to 150; that stretch reads REDT. The propeptide occupies 147–154; the sequence is REDTEEAR. The Processing quadruplet motif 5 motif lies at 151–154; the sequence is EEAR. Phe178 is modified (phenylalanine amide).

It belongs to the cationic peptide 03 (latarcin) family. 04 subfamily. Cleavage of the propeptide depends on the processing quadruplet motif (PQM) (XXXR, with at least one of X being E) and the inverted PQM (RXXX, with at least one of X being E). In terms of tissue distribution, expressed by the venom gland.

It localises to the secreted. Functionally, M-zodatoxin-Lt4b: Has antimicrobial activity against Gram-positive bacteria (A.globiformis VKM Ac-1112 (MIC=0.3 uM), and B.subtilis VKM B-501 (MIC=1.1 uM)), Gram-negative bacteria (E.coli DH5-alpha (MIC=4.4 uM), E.coli MH1 (MIC=4.4 uM), and P.aeruginosa PAO1 (MIC=&gt;35 uM)), and yeasts (P.pastoris GS115 (MIC=&gt;35 uM), and S.cerevisiae Y190 (MIC=35 uM)). Does not have hemolytic activity against rabbit erythrocytes. Causes paralysis, but is not lethal when injected into insect (M.domestica) larvae. Its function is as follows. Shows no antimicrobial activity against Gram-positive bacterium B.subtilis B-501 or Gram-negative bacterium E.coli DH5-alpha at concentration up to 20 uM. This Lachesana tarabaevi (Spider) protein is M-zodatoxin-Lt4b.